An 894-amino-acid polypeptide reads, in one-letter code: Septin and tuftelin-interacting protein 1 homolog (894 aa).

Disordered stretches follow at residues 71–149 (YEPN…DKPV) and 187–225 (NAGL…RSLG). The segment covering 73–84 (PNEHKLKNKDGE) has biased composition (basic and acidic residues). Positions 97-126 (KKKKKEKKEKKQKKKEKKEKKEKKNKKKNK) are enriched in basic residues. The 47-residue stretch at 149–195 (VGGIGAALLSKMGYKGTGGLGRDGGGMVEPIKVQVRPKNAGLASVTE) folds into the G-patch domain. A compositionally biased stretch (acidic residues) spans 202-217 (DDSDDSDQSEGDTDSD). The stretch at 329–449 (KQIDIQNQDN…SDNNDNSSLE (121 aa)) forms a coiled coil. The segment at 785–821 (NNNNNNNINNSYQQQNQQQPIKPISSPSLNSSNNNNI) is disordered.

The protein belongs to the TFP11/STIP family. In terms of assembly, identified in the spliceosome C complex.

It localises to the cytoplasm. It is found in the nucleus. May be involved in pre-mRNA splicing. The polypeptide is Septin and tuftelin-interacting protein 1 homolog (stip-1) (Dictyostelium discoideum (Social amoeba)).